The following is an 86-amino-acid chain: Toxin CSTX-20 (86 aa).

In terms of tissue distribution, expressed by the venom gland.

Its subcellular location is the secreted. This Cupiennius salei (American wandering spider) protein is Toxin CSTX-20.